Here is a 61-residue protein sequence, read N- to C-terminus: MPNPVKRHSRTRRNMRRAHDFLTPVQASACPQCGKFKLPHRVCPYCGTYKGRTVIKVENLA.

This sequence belongs to the bacterial ribosomal protein bL32 family.

This Syntrophus aciditrophicus (strain SB) protein is Large ribosomal subunit protein bL32.